The following is a 72-amino-acid chain: Large ribosomal subunit protein uL29 (72 aa).

The protein belongs to the universal ribosomal protein uL29 family.

In Chlamydia caviae (strain ATCC VR-813 / DSM 19441 / 03DC25 / GPIC) (Chlamydophila caviae), this protein is Large ribosomal subunit protein uL29.